Here is a 231-residue protein sequence, read N- to C-terminus: Phosphatidylserine decarboxylase proenzyme (231 aa).

The active-site Schiff-base intermediate with substrate; via pyruvic acid is the S188. The residue at position 188 (S188) is a Pyruvic acid (Ser); by autocatalysis.

Belongs to the phosphatidylserine decarboxylase family. PSD-A subfamily. Heterodimer of a large membrane-associated beta subunit and a small pyruvoyl-containing alpha subunit. It depends on pyruvate as a cofactor. Is synthesized initially as an inactive proenzyme. Formation of the active enzyme involves a self-maturation process in which the active site pyruvoyl group is generated from an internal serine residue via an autocatalytic post-translational modification. Two non-identical subunits are generated from the proenzyme in this reaction, and the pyruvate is formed at the N-terminus of the alpha chain, which is derived from the carboxyl end of the proenzyme. The post-translation cleavage follows an unusual pathway, termed non-hydrolytic serinolysis, in which the side chain hydroxyl group of the serine supplies its oxygen atom to form the C-terminus of the beta chain, while the remainder of the serine residue undergoes an oxidative deamination to produce ammonia and the pyruvoyl prosthetic group on the alpha chain.

The protein resides in the cell membrane. The enzyme catalyses a 1,2-diacyl-sn-glycero-3-phospho-L-serine + H(+) = a 1,2-diacyl-sn-glycero-3-phosphoethanolamine + CO2. It functions in the pathway phospholipid metabolism; phosphatidylethanolamine biosynthesis; phosphatidylethanolamine from CDP-diacylglycerol: step 2/2. Functionally, catalyzes the formation of phosphatidylethanolamine (PtdEtn) from phosphatidylserine (PtdSer). The sequence is that of Phosphatidylserine decarboxylase proenzyme from Rickettsia peacockii (strain Rustic).